A 397-amino-acid polypeptide reads, in one-letter code: MKQFLVVLLILSFVHGIIRVPLKRQKSMRKILKEKGKLSHLWTKQGNEFLQLSDSCSSPETASEPLMNYLDVEYFGQISIGTPPQQFTVIFDTGSSNLWVPSIYCTSQACTKHNRYRPSESTTYVSNGEAFFIQYGTGNLTGILGIDQVTVQGITVQSQTFAESVSEPGSTFQDSNFDGILGLAYPNLAVDNCIPVFDNMIAQNLVELPLFGVYMNRDPNSADGGELVLGGFDTSRFSGQLNWVPITVQGYWQIQVDSIQVAGQVIFCSDGCQAIVDTGTSLITGPSGDIEQLQNYIGVTNTNGEYGVSCSTLSLMPSVTFTINGLDYSLTPEQYMLEDGGGYCSSGFQGLDISPPSGPLWILGDVFIGQYYSVFDRGNNRVGFAPVVFYETTTNGA.

The signal sequence occupies residues methionine 1–glycine 16. The propeptide at isoleucine 17–phenylalanine 49 is activation peptide. In terms of domain architecture, Peptidase A1 spans tyrosine 74–alanine 385. Aspartate 92 is a catalytic residue. Cysteine 105 and cysteine 110 form a disulfide bridge. N-linked (GlcNAc...) asparagine glycosylation is present at asparagine 139. A disulfide bridge links cysteine 268 with cysteine 272. The active site involves aspartate 277. Cysteine 310 and cysteine 344 are joined by a disulfide.

The protein belongs to the peptidase A1 family. Homodimer; disulfide-linked. Glycosylated. Contains high mannose-type oligosaccharide. In terms of tissue distribution, found in the larval foregut and adult stomach.

Its subcellular location is the endosome. It catalyses the reaction Similar to cathepsin D, but slightly broader specificity.. In terms of biological role, may have a role in immune function. Probably involved in the processing of antigenic peptides during MHC class II-mediated antigen presentation. The polypeptide is Cathepsin E (CTSE) (Aquarana catesbeiana (American bullfrog)).